Here is a 502-residue protein sequence, read N- to C-terminus: MKIFLVILSVFFFNGCFGLAYKTPISNPPISYDPYTTTIGSLYAKNLKENPKHSAAILLEDGFDALLHRVGLIRMSQKSIDMQTYIYKNDLSSQVIAKELLNAANRGVKVRILLDDNGLDSDFSDIMLLNFHKNIEVKIFNPYYIRNKGLRYFEMLADYERIKKRMHNKLFIVDNFAVIIGGRNIGDNYFDNDLDTNFLDLDALFFGGVASKAKESFENYWRFHRSIPVSLLRTHKRLKNNVKEIAKLHEKIPISAEDANEFEKKVNDFIERFQKYQYPIYYGNAIFLADLPAKIDTPLYSPIKIAFEKALKNAKDSVFIASSYFIPGKKIMKIFKNQISKGIELNILTNSLSSTDAIVVYGAWERYRNKLVRMGANVYEIRNDFFNRQIKGRFSTKHSLHGKTIVFDDALTLLGSFNIDPRSAYINTESAVLFDNPSFAKRVRLSLKDHAQQSWHLVLYRHRVIWEATEEGILIHEKNSPDTSFFLRLIKEWSKVLPEREL.

The helical transmembrane segment at Met-1–Tyr-21 threads the bilayer. PLD phosphodiesterase domains follow at residues Ile-162–Tyr-189 and Thr-396–Ser-423.

This sequence belongs to the phospholipase D family. Cardiolipin synthase subfamily.

Its subcellular location is the cell membrane. This is an uncharacterized protein from Helicobacter pylori (strain J99 / ATCC 700824) (Campylobacter pylori J99).